Here is a 214-residue protein sequence, read N- to C-terminus: Neuromodulin (214 aa).

Residues 1–214 (MLCCMRRTKQ…EEAKPDQENA (214 aa)) form a disordered region. Residues cysteine 3 and cysteine 4 are each lipidated (S-palmitoyl cysteine). Basic and acidic residues-rich tracts occupy residues 9–33 (KQVE…DKAH), 52–88 (MKDD…KTEE), and 95–122 (LEVK…KDTP). The region spanning 32-61 (AHKAATKIQASFRGHIIRKKMKDDKKDDNS) is the IQ domain. Low complexity predominate over residues 124–133 (EENQASAESE). 3 stretches are compositionally biased toward basic and acidic residues: residues 150–160 (QAKEESKKADV), 168–193 (ASEK…EIKA), and 205–214 (EEAKPDQENA).

It belongs to the neuromodulin family. In terms of assembly, binds calmodulin with a greater affinity in the absence of Ca(2+) than in its presence. Post-translationally, palmitoylated. Palmitoylation is essential for plasma membrane association.

The protein resides in the cell membrane. It is found in the cell projection. The protein localises to the growth cone membrane. Its subcellular location is the synapse. It localises to the filopodium membrane. This protein is associated with nerve growth. It is a major component of the motile 'growth cones' that form the tips of elongating axons. Plays a role in axonal and dendritic filopodia induction. In Xenopus laevis (African clawed frog), this protein is Neuromodulin (gap43).